A 642-amino-acid chain; its full sequence is DNA primase (642 aa).

The CHC2-type zinc-finger motif lies at 41 to 65 (CPFHNEKSPSFHVRPNHGHFHCFGC). The Toprim domain occupies 262 to 348 (HQAVVVEGYT…AGKSFVAVAA (87 aa)). Positions 268, 319, and 321 each coordinate Mg(2+). Residues 445 to 480 (NRRSVPERTRRRSVSVEQSPFMQPPGAPADQLAARP) form a disordered region.

It belongs to the DnaG primase family. As to quaternary structure, monomer. Interacts with DnaB. Zn(2+) serves as cofactor. It depends on Mg(2+) as a cofactor.

The enzyme catalyses ssDNA + n NTP = ssDNA/pppN(pN)n-1 hybrid + (n-1) diphosphate.. Its function is as follows. RNA polymerase that catalyzes the synthesis of short RNA molecules used as primers for DNA polymerase during DNA replication. The chain is DNA primase from Mycobacterium leprae (strain TN).